The following is a 2080-amino-acid chain: Dysferlin (2080 aa).

The region spanning 1–101 (MLRVFILYAE…LATPSLSASF (101 aa)) is the C2 1 domain. The Cytoplasmic portion of the chain corresponds to 1-2046 (MLRVFILYAE…FILWRRFRWA (2046 aa)). Ca(2+) is bound by residues aspartate 18, isoleucine 19, aspartate 21, and asparagine 40. Pro residues predominate over residues 132–144 (LFPPPTPLEPSPT). A disordered region spans residues 132–215 (LFPPPTPLEP…APTSRKLLSD (84 aa)). The span at 155–172 (GGEEDTEDQGLTGDEAEP) shows a compositional bias: acidic residues. Phosphothreonine is present on threonine 166. A phosphoserine mark is found at threonine 166 and glycine 167. Phosphothreonine occurs at positions 197 and 198. 6 C2 domains span residues 203–321 (KRSA…RKWL), 360–496 (DKED…EEEP), 1136–1262 (GVNR…PLTR), 1310–1438 (PPPQ…AESP), 1561–1679 (PMPP…ARCG), and 1795–1943 (GRPG…KKCS). Residues aspartate 1168, aspartate 1174, aspartate 1230, and aspartate 1232 each coordinate Ca(2+). The Ca(2+) site is built by aspartate 1594, aspartate 1600, aspartate 1649, aspartate 1651, aspartate 1914, serine 1917, and aspartate 1920. Positions 1995 to 2017 (SEHEERPAGQGRDEPNMNPKLED) are disordered. The chain crosses the membrane as a helical span at residues 2047–2067 (IILFIILFILLLFLAIFIYAF). Over 2068–2080 (PNYAAMKLVKPFS) the chain is Extracellular.

Belongs to the ferlin family. Interacts with CACNA1S. Interacts with ANXA1; the interaction is Ca(2+)- and injury state-dependent. Interacts with ANXA2; the interaction is Ca(2+)- and injury state-dependent. Interacts with CACNA1S and PARVB. Interacts with TRIM72/MG53; interaction is required for transport to sites of cell injury during repair patch formation. Interacts with RIPOR2; this interaction occurs during early myogenic differentiation. Interacts with CAV3 and PARVB. Interacts with AHNAK; the interaction is direct and Ca(2+)-independent. Interacts with AHNAK2; the interaction is direct and Ca(2+)-independent. Ca(2+) serves as cofactor. Expressed in skeletal muscle, myoblast, myotube and in the syncytiotrophoblast (STB) of the placenta (at protein level). Ubiquitous. Highly expressed in skeletal muscle. Also found in heart, brain, spleen, intestine, placenta and at lower levels in liver, lung, kidney and pancreas.

Its subcellular location is the cell membrane. The protein localises to the sarcolemma. The protein resides in the cytoplasmic vesicle membrane. Key calcium ion sensor involved in the Ca(2+)-triggered synaptic vesicle-plasma membrane fusion. Plays a role in the sarcolemma repair mechanism of both skeletal muscle and cardiomyocytes that permits rapid resealing of membranes disrupted by mechanical stress. This is Dysferlin (DYSF) from Homo sapiens (Human).